Here is a 1107-residue protein sequence, read N- to C-terminus: DNA-directed RNA polymerase subunit beta (1107 aa).

The segment covering 1062–1075 (DNEGNEKEKARELG) has biased composition (basic and acidic residues). The interval 1062 to 1081 (DNEGNEKEKARELGLDLPDN) is disordered.

This sequence belongs to the RNA polymerase beta chain family. The RNAP catalytic core consists of 2 alpha, 1 beta, 1 beta' and 1 omega subunit. When a sigma factor is associated with the core the holoenzyme is formed, which can initiate transcription.

The enzyme catalyses RNA(n) + a ribonucleoside 5'-triphosphate = RNA(n+1) + diphosphate. Its function is as follows. DNA-dependent RNA polymerase catalyzes the transcription of DNA into RNA using the four ribonucleoside triphosphates as substrates. The sequence is that of DNA-directed RNA polymerase subunit beta from Syntrophomonas wolfei subsp. wolfei (strain DSM 2245B / Goettingen).